The sequence spans 282 residues: HTH-type transcriptional activator RhaR (282 aa).

Residues 179 to 277 (DKLITALANS…GMTPSQWRHL (99 aa)) form the HTH araC/xylS-type domain. 2 DNA-binding regions (H-T-H motif) span residues 196-217 (DAFC…RAQT) and 244-267 (ISEI…TRET).

In terms of assembly, binds DNA as a dimer.

It localises to the cytoplasm. Functionally, activates expression of the rhaSR operon in response to L-rhamnose. The protein is HTH-type transcriptional activator RhaR of Salmonella agona (strain SL483).